Here is a 90-residue protein sequence, read N- to C-terminus: Probable small nuclear ribonucleoprotein E (90 aa).

Residues 14-89 (VNLIFRYLQN…ITLIHAAAQE (76 aa)) enclose the Sm domain.

It belongs to the snRNP Sm proteins family. Core component of the spliceosomal U1, U2, U4 and U5 small nuclear ribonucleoproteins (snRNPs), the building blocks of the spliceosome.

The protein localises to the nucleus. Its subcellular location is the cytoplasm. It is found in the cytosol. Functionally, plays a role in pre-mRNA splicing as a core component of the spliceosomal U1, U2, U4 and U5 small nuclear ribonucleoproteins (snRNPs), the building blocks of the spliceosome. In Caenorhabditis briggsae, this protein is Probable small nuclear ribonucleoprotein E (snr-6).